Here is a 236-residue protein sequence, read N- to C-terminus: Heme oxygenase (236 aa).

Position 17 (His-17) interacts with heme b.

Belongs to the heme oxygenase family.

The protein localises to the plastid. It localises to the chloroplast. The enzyme catalyses heme b + 3 reduced [NADPH--hemoprotein reductase] + 3 O2 = biliverdin IXalpha + CO + Fe(2+) + 3 oxidized [NADPH--hemoprotein reductase] + 3 H2O + H(+). Catalyzes the opening of the heme ring with the release of iron. Key enzyme in the synthesis of the chromophoric part of the photosynthetic antennae. The polypeptide is Heme oxygenase (pbsA) (Porphyra purpurea (Red seaweed)).